The chain runs to 968 residues: Isoleucine--tRNA ligase (968 aa).

The 'HIGH' region signature appears at 68–78; it reads PYANGALHMGH. An L-isoleucyl-5'-AMP-binding site is contributed by E582. Residues 623–627 carry the 'KMSKS' region motif; it reads KMSKS. Residue K626 coordinates ATP. C936, C939, C956, and C959 together coordinate Zn(2+).

Belongs to the class-I aminoacyl-tRNA synthetase family. IleS type 1 subfamily. Monomer. It depends on Zn(2+) as a cofactor.

The protein localises to the cytoplasm. It catalyses the reaction tRNA(Ile) + L-isoleucine + ATP = L-isoleucyl-tRNA(Ile) + AMP + diphosphate. In terms of biological role, catalyzes the attachment of isoleucine to tRNA(Ile). As IleRS can inadvertently accommodate and process structurally similar amino acids such as valine, to avoid such errors it has two additional distinct tRNA(Ile)-dependent editing activities. One activity is designated as 'pretransfer' editing and involves the hydrolysis of activated Val-AMP. The other activity is designated 'posttransfer' editing and involves deacylation of mischarged Val-tRNA(Ile). This Prochlorococcus marinus (strain AS9601) protein is Isoleucine--tRNA ligase.